The chain runs to 201 residues: Ribosomal RNA small subunit methyltransferase G (201 aa).

S-adenosyl-L-methionine contacts are provided by residues G71, F76, 120–121, and R134; that span reads LE.

Belongs to the methyltransferase superfamily. RNA methyltransferase RsmG family.

The protein resides in the cytoplasm. It carries out the reaction guanosine(527) in 16S rRNA + S-adenosyl-L-methionine = N(7)-methylguanosine(527) in 16S rRNA + S-adenosyl-L-homocysteine. In terms of biological role, specifically methylates the N7 position of guanine in position 527 of 16S rRNA. The protein is Ribosomal RNA small subunit methyltransferase G of Rhodospirillum rubrum (strain ATCC 11170 / ATH 1.1.1 / DSM 467 / LMG 4362 / NCIMB 8255 / S1).